We begin with the raw amino-acid sequence, 387 residues long: Phosphoglycerate kinase (387 aa).

Substrate-binding positions include 21 to 23 (DLN), R36, 59 to 62 (HLGR), R113, and R146. ATP-binding positions include K197, E314, and 340–343 (GGDT).

It belongs to the phosphoglycerate kinase family. Monomer.

The protein resides in the cytoplasm. The catalysed reaction is (2R)-3-phosphoglycerate + ATP = (2R)-3-phospho-glyceroyl phosphate + ADP. It participates in carbohydrate degradation; glycolysis; pyruvate from D-glyceraldehyde 3-phosphate: step 2/5. The sequence is that of Phosphoglycerate kinase from Klebsiella pneumoniae (strain 342).